We begin with the raw amino-acid sequence, 754 residues long: Putative sulfate transporter YPR003C (754 aa).

Positions 1-91 (MTSNNSLLGR…NTSNTNNNDS (91 aa)) are disordered. The Cytoplasmic segment spans residues 1 to 118 (MTSNNSLLGR…SWLPEYTFNK (118 aa)). Residues 25–45 (RSVDQRDTFSDNFDYDKDSSN) show a composition bias toward basic and acidic residues. The span at 65 to 89 (NSRSGCTNNTNNTNNTSNTSNTNNN) shows a compositional bias: low complexity. A helical membrane pass occupies residues 119–139 (LWGDVIAGISVASFQIPLALS). Over 140-146 (YTTSIAH) the chain is Lumenal. A helical membrane pass occupies residues 147-167 (VPPLCGLYSLAISPFVYGILG). At 168-172 (SVPQM) the chain is on the cytoplasmic side. Residues 173 to 193 (IVGPESAISLVVGQAVESITL) form a helical membrane-spanning segment. Residues 194 to 199 (HKENVS) lie on the Lumenal side of the membrane. The helical transmembrane segment at 200–220 (LIDISTVITFVSGTILLFSGI) threads the bilayer. Over 221–232 (SRFGFLGNVLSK) the chain is Cytoplasmic. Residues 233-253 (ALLRGFISSVGLVMIINSLIS) traverse the membrane as a helical segment. Residues 254–282 (ELKLDKFLVSLPQHYHTPFEKILFLIDYA) are Lumenal-facing. The chain crosses the membrane as a helical span at residues 283 to 303 (PAQYHIPTAIFSGCCLIVLFL). The Cytoplasmic segment spans residues 304–317 (TRLLKRKLMKYHKS). A helical transmembrane segment spans residues 318–338 (AIFFPDILLVVIVTILISMKF). Residues 339–370 (NLKHRYGISIIGDFSMDNFDELKNPLTRPRRK) are Lumenal-facing. A helical transmembrane segment spans residues 371-391 (LIPDLFSASLIVAMLGFFEST). Residues 392–410 (TASKSLGTTYNLTVSSNRE) lie on the Cytoplasmic side of the membrane. The helical transmembrane segment at 411–431 (LVALGFMNIVISLFGALPAFG) threads the bilayer. Topologically, residues 432–450 (GYGRSKINALSGAQSVMSG) are lumenal. The chain crosses the membrane as a helical span at residues 451 to 471 (VFMGVITLITMNLLLQFVHYI). The Cytoplasmic segment spans residues 472 to 474 (PNC). The helical transmembrane segment at 475–495 (VLSVITTIIGISLLEEVPGDI) threads the bilayer. Residues 496 to 517 (KFHLRCGGFSELFVFAVTFCTT) lie on the Lumenal side of the membrane. A helical membrane pass occupies residues 518-538 (IFYSIEAGICIGCVYSIINII). The Cytoplasmic portion of the chain corresponds to 539–754 (KHSAKSRIQI…SNTLFNSSLV (216 aa)). The STAS domain occupies 574-725 (DVEGTEEIEG…DSIDAALYEI (152 aa)).

The protein belongs to the SLC26A/SulP transporter (TC 2.A.53) family.

Its subcellular location is the endoplasmic reticulum membrane. Possible sulfate transporter. The polypeptide is Putative sulfate transporter YPR003C (Saccharomyces cerevisiae (strain ATCC 204508 / S288c) (Baker's yeast)).